Consider the following 66-residue polypeptide: MKPSEIREMSIEEIDKKIRELRLELAKERAVLTMGASLENPMVIRNIRRDIARLLTIKKEKLREKR.

Belongs to the universal ribosomal protein uL29 family.

The chain is Large ribosomal subunit protein uL29 from Thermococcus onnurineus (strain NA1).